The following is a 304-amino-acid chain: Foldase protein PrsA (304 aa).

Residues 1-19 (MKKKLLSVAAVASVFTLAA) form the signal peptide. Cys-20 carries the N-palmitoyl cysteine lipid modification. A lipid anchor (S-diacylglycerol cysteine) is attached at Cys-20. The PpiC domain occupies 140-231 (KVEVKASHIL…FGYHIIKVTD (92 aa)). The segment at 285-304 (FDLDKQEQQQMQQQMQQQQQ) is disordered. Residues 292-304 (QQQMQQQMQQQQQ) show a composition bias toward low complexity.

The protein belongs to the PrsA family.

It localises to the cell membrane. It catalyses the reaction [protein]-peptidylproline (omega=180) = [protein]-peptidylproline (omega=0). In terms of biological role, plays a major role in protein secretion by helping the post-translocational extracellular folding of several secreted proteins. In Exiguobacterium sibiricum (strain DSM 17290 / CCUG 55495 / CIP 109462 / JCM 13490 / 255-15), this protein is Foldase protein PrsA.